The following is a 950-amino-acid chain: Oxysterol-binding protein-related protein 1 (950 aa).

Residues 1–237 (MNTEAEQQLL…NKVIYKALKR (237 aa)) are interaction with RAB7A. ANK repeat units lie at residues 47–76 (LGWTPLHLACYFGHRQVVQDLLKAGAEVNV), 80–109 (MGDTPLHRAAFTGRKELVMLLLEYNADTTI), and 175–204 (LGNTPLHCAAYRAHKQCALKLLRSGADPNL). Residues 235 to 334 (LKRYEGPLWK…WLEAIEEHSA (100 aa)) enclose the PH domain. Residues 430–463 (NFKLEQEQEKNKILSEALETLATEHHELEQSLVK) are a coiled coil. The FFAT motif lies at 469 to 485 (SILSEDEFYDALSDSES). Serine 499 bears the Phosphoserine mark. Residues 501–521 (EEEGEHLGSRKHRMSEEKDCG) show a composition bias toward basic and acidic residues. Disordered stretches follow at residues 501–527 (EEEGEHLGSRKHRMSEEKDCGGGDALS), 795–816 (KKNTEEKKNSKQMSTSEELDEM), and 881–913 (MENGEIDQASEEKKRLEEKQRAARKNRSKSEED). Residues 877 to 913 (DIRAMENGEIDQASEEKKRLEEKQRAARKNRSKSEED) are a coiled coil. Positions 890 to 901 (SEEKKRLEEKQR) are enriched in basic and acidic residues.

It belongs to the OSBP family. Interacts (via FFAT motif) with VAPA and VAPB. Interacts with the GTP-bound form of RAB7A. Interacts with OAS1B. Interacts (via FFAT motif) with MOSPD2 (via MSP domain).

The protein localises to the late endosome. Its function is as follows. Binds phospholipids; exhibits strong binding to phosphatidic acid and weak binding to phosphatidylinositol 3-phosphate. Stabilizes GTP-bound RAB7A on late endosomes/lysosomes and alters functional properties of late endocytic compartments via its interaction with RAB7A. Binds 25-hydroxycholesterol and cholesterol. The polypeptide is Oxysterol-binding protein-related protein 1 (Homo sapiens (Human)).